The chain runs to 242 residues: Purine nucleoside phosphorylase SCO2081 (242 aa).

3 residues coordinate Zn(2+): His68, Cys106, and His123.

It belongs to the purine nucleoside phosphorylase YfiH/LACC1 family. In terms of assembly, homodimer. Cu(2+) serves as cofactor. Requires Zn(2+) as cofactor.

The enzyme catalyses adenosine + phosphate = alpha-D-ribose 1-phosphate + adenine. The catalysed reaction is S-methyl-5'-thioadenosine + phosphate = 5-(methylsulfanyl)-alpha-D-ribose 1-phosphate + adenine. It carries out the reaction inosine + phosphate = alpha-D-ribose 1-phosphate + hypoxanthine. It catalyses the reaction adenosine + H2O + H(+) = inosine + NH4(+). In terms of biological role, purine nucleoside enzyme that catalyzes the phosphorolysis of adenosine and inosine nucleosides, yielding D-ribose 1-phosphate and the respective free bases, adenine and hypoxanthine. Also catalyzes the phosphorolysis of S-methyl-5'-thioadenosine into adenine and S-methyl-5-thio-alpha-D-ribose 1-phosphate. Also has adenosine deaminase activity. In Streptomyces coelicolor (strain ATCC BAA-471 / A3(2) / M145), this protein is Purine nucleoside phosphorylase SCO2081.